A 129-amino-acid polypeptide reads, in one-letter code: Glycine cleavage system H protein (129 aa).

The 83-residue stretch at 24–106 (TYTVGITEHA…YTDGWIFKIK (83 aa)) folds into the Lipoyl-binding domain. The residue at position 65 (Lys-65) is an N6-lipoyllysine.

It belongs to the GcvH family. The glycine cleavage system is composed of four proteins: P, T, L and H. The cofactor is (R)-lipoate.

Functionally, the glycine cleavage system catalyzes the degradation of glycine. The H protein shuttles the methylamine group of glycine from the P protein to the T protein. This is Glycine cleavage system H protein from Klebsiella pneumoniae subsp. pneumoniae (strain ATCC 700721 / MGH 78578).